Here is a 238-residue protein sequence, read N- to C-terminus: Ribosomal RNA small subunit methyltransferase G (238 aa).

S-adenosyl-L-methionine is bound by residues Gly-77, Phe-82, 128-129 (AE), and Arg-147. The disordered stretch occupies residues 219–238 (KKTPARYPRKPGTPNKQPIQ).

This sequence belongs to the methyltransferase superfamily. RNA methyltransferase RsmG family.

The protein resides in the cytoplasm. In terms of biological role, specifically methylates the N7 position of guanine in position 535 of 16S rRNA. The sequence is that of Ribosomal RNA small subunit methyltransferase G from Geobacillus thermodenitrificans (strain NG80-2).